A 441-amino-acid polypeptide reads, in one-letter code: Serine/threonine-protein kinase prk-2 (441 aa).

Positions 31-285 (YKLKAELGRG…LEAILNHPWV (255 aa)) constitute a Protein kinase domain. Residues 37 to 45 (LGRGGFGVV) and lysine 60 contribute to the ATP site. Aspartate 158 (proton acceptor) is an active-site residue. Residues 301–364 (QKKTSESSDD…NQKKPNHKEF (64 aa)) are disordered. Residues 303 to 320 (KTSESSDDHHSETLGDHS) are compositionally biased toward basic and acidic residues. The segment covering 328-338 (PPTSSVSQQPG) has biased composition (polar residues).

Belongs to the protein kinase superfamily. Ser/Thr protein kinase family. PIM subfamily. The cofactor is Mg(2+).

The enzyme catalyses L-seryl-[protein] + ATP = O-phospho-L-seryl-[protein] + ADP + H(+). It carries out the reaction L-threonyl-[protein] + ATP = O-phospho-L-threonyl-[protein] + ADP + H(+). In terms of biological role, involved in the negative regulation of synaptic differentiation in PLM neurons. In Caenorhabditis elegans, this protein is Serine/threonine-protein kinase prk-2.